Reading from the N-terminus, the 151-residue chain is Large ribosomal subunit protein uL13 (151 aa).

The protein belongs to the universal ribosomal protein uL13 family. In terms of assembly, part of the 50S ribosomal subunit.

In terms of biological role, this protein is one of the early assembly proteins of the 50S ribosomal subunit, although it is not seen to bind rRNA by itself. It is important during the early stages of 50S assembly. This is Large ribosomal subunit protein uL13 from Microchaete diplosiphon (Fremyella diplosiphon).